The following is a 530-amino-acid chain: Putative ABC transporter ATP-binding protein SSO2030 (530 aa).

2 ABC transporter domains span residues 6–243 (IRDL…LGLE) and 282–516 (ALYA…EPPL). ATP contacts are provided by residues 38-45 (GRSGSGKS) and 314-321 (GKNGSGKT).

The protein belongs to the ABC transporter superfamily.

It localises to the cell membrane. Its function is as follows. Probably part of an ABC transporter complex. Responsible for energy coupling to the transport system. The sequence is that of Putative ABC transporter ATP-binding protein SSO2030 from Saccharolobus solfataricus (strain ATCC 35092 / DSM 1617 / JCM 11322 / P2) (Sulfolobus solfataricus).